A 120-amino-acid polypeptide reads, in one-letter code: NAD(P)H-quinone oxidoreductase subunit 3, chloroplastic (120 aa).

Helical transmembrane passes span 3-23 (ILEG…IPVI), 64-84 (MFAL…PWAV), and 89-109 (LGLS…IGLV).

The protein belongs to the complex I subunit 3 family. In terms of assembly, NDH is composed of at least 16 different subunits, 5 of which are encoded in the nucleus.

Its subcellular location is the plastid. The protein resides in the chloroplast thylakoid membrane. It carries out the reaction a plastoquinone + NADH + (n+1) H(+)(in) = a plastoquinol + NAD(+) + n H(+)(out). The catalysed reaction is a plastoquinone + NADPH + (n+1) H(+)(in) = a plastoquinol + NADP(+) + n H(+)(out). NDH shuttles electrons from NAD(P)H:plastoquinone, via FMN and iron-sulfur (Fe-S) centers, to quinones in the photosynthetic chain and possibly in a chloroplast respiratory chain. The immediate electron acceptor for the enzyme in this species is believed to be plastoquinone. Couples the redox reaction to proton translocation, and thus conserves the redox energy in a proton gradient. This is NAD(P)H-quinone oxidoreductase subunit 3, chloroplastic from Nephroselmis olivacea (Green alga).